A 552-amino-acid chain; its full sequence is Non-structural protein NS1 (552 aa).

Belongs to the orbivirus non-structural protein NS1 family.

The polypeptide is Non-structural protein NS1 (Segment-5) (Epizootic hemorrhagic disease virus 2 (strain Alberta) (EHDV-2)).